Reading from the N-terminus, the 118-residue chain is Large ribosomal subunit protein uL18 (118 aa).

This sequence belongs to the universal ribosomal protein uL18 family. As to quaternary structure, part of the 50S ribosomal subunit; part of the 5S rRNA/L5/L18/L25 subcomplex. Contacts the 5S and 23S rRNAs.

In terms of biological role, this is one of the proteins that bind and probably mediate the attachment of the 5S RNA into the large ribosomal subunit, where it forms part of the central protuberance. The chain is Large ribosomal subunit protein uL18 from Helicobacter pylori (strain P12).